We begin with the raw amino-acid sequence, 422 residues long: Calpain-2 catalytic subunit (422 aa).

One can recognise a Calpain catalytic domain in the interval 1–66 (QKLIRIRNPW…YSRLEICNLT (66 aa)). Residue N8 is part of the active site. Residues E14, D21, and E45 each contribute to the Ca(2+) site. Residues 67 to 236 (PDTLTSDTYK…KKADYQAVDD (170 aa)) form a domain III region. Residues 237–251 (EIEADLEEADVSEDD) are linker. The segment at 252 to 422 (IDDGFRRLFA…LISWLCFSVL (171 aa)) is domain IV. 16 residues coordinate Ca(2+): A264, D267, E269, E274, D307, D309, T311, K313, E318, D337, D339, S341, T343, E348, D380, and N383. 2 consecutive EF-hand domains span residues 294–327 (LSIETCKIMVDMLDSDGTGKLGLKEFYVLWTKIQ) and 324–359 (TKIQKYQKIYREIDVDRSGTMNSYEMRKALEEAGFK). The 34-residue stretch at 389–422 (VRLETLFKIFKQLDPDNTGMIQLDLISWLCFSVL) folds into the EF-hand 3 domain.

Belongs to the peptidase C2 family. In terms of assembly, forms a heterodimer with a small (regulatory) subunit (CAPNS1). Interacts with CPEB3; this leads to cleavage of CPEB3. Ca(2+) serves as cofactor. In terms of tissue distribution, ubiquitous.

It localises to the cytoplasm. It is found in the cell membrane. The catalysed reaction is Broad endopeptidase specificity.. Its activity is regulated as follows. Activated by 200-1000 micromolar concentrations of calcium and inhibited by calpastatin. Functionally, calcium-regulated non-lysosomal thiol-protease which catalyzes limited proteolysis of substrates involved in cytoskeletal remodeling and signal transduction. Proteolytically cleaves MYOC at 'Arg-226'. Proteolytically cleaves CPEB3 following neuronal stimulation which abolishes CPEB3 translational repressor activity, leading to translation of CPEB3 target mRNAs. The protein is Calpain-2 catalytic subunit (CAPN2) of Oryctolagus cuniculus (Rabbit).